Consider the following 203-residue polypeptide: Histidine biosynthesis bifunctional protein HisIE (203 aa).

The segment at 1-114 (MLTEQQRREL…FGDTAHQWLF (114 aa)) is phosphoribosyl-AMP cyclohydrolase. Residues 115–203 (LYQLEQLLAE…VIENLRKRHQ (89 aa)) are phosphoribosyl-ATP pyrophosphohydrolase.

This sequence in the N-terminal section; belongs to the PRA-CH family. It in the C-terminal section; belongs to the PRA-PH family.

It localises to the cytoplasm. It catalyses the reaction 1-(5-phospho-beta-D-ribosyl)-ATP + H2O = 1-(5-phospho-beta-D-ribosyl)-5'-AMP + diphosphate + H(+). The catalysed reaction is 1-(5-phospho-beta-D-ribosyl)-5'-AMP + H2O = 1-(5-phospho-beta-D-ribosyl)-5-[(5-phospho-beta-D-ribosylamino)methylideneamino]imidazole-4-carboxamide. It participates in amino-acid biosynthesis; L-histidine biosynthesis; L-histidine from 5-phospho-alpha-D-ribose 1-diphosphate: step 2/9. It functions in the pathway amino-acid biosynthesis; L-histidine biosynthesis; L-histidine from 5-phospho-alpha-D-ribose 1-diphosphate: step 3/9. The polypeptide is Histidine biosynthesis bifunctional protein HisIE (hisI) (Escherichia coli (strain K12)).